The chain runs to 528 residues: Glucosidase 2 subunit beta (528 aa).

The first 14 residues, 1-14, serve as a signal peptide directing secretion; it reads MLLPLLLLLPMCWA. Position 24 is a phosphoserine; by FAM20C (S24). LDL-receptor class A domains follow at residues 37 to 71 and 72 to 113; these read FTCL…AACP and NGSF…VICE. 2 disulfide bridges follow: C39-C58 and C56-C70. Residue D49 coordinates substrate. Q50, D53, Y55, D57, D63, and E64 together coordinate Ca(2+). Residue D53 participates in substrate binding. N72 carries N-linked (GlcNAc...) asparagine glycosylation. Cystine bridges form between C77–C99, C97–C112, and C100–C116. Residue S89 is modified to Phosphoserine; by PKC. Ca(2+) is bound by residues R91, D94, V96, D98, D104, and E105. Residue K166 is modified to N6-succinyllysine. Residue S168 is modified to Phosphoserine; by FAM20C. 2 EF-hand domains span residues 209–244 and 245–290; these read QEQE…DTDG and DGAL…TDLP. Ca(2+)-binding residues include D222, D224, D226, T228, and E233. Disordered stretches follow at residues 234–266 and 281–357; these read LQTH…TDAT and RSEA…DKMP. A compositionally biased stretch (low complexity) spans 247 to 258; the sequence is ALSEAEAQALLS. A compositionally biased stretch (acidic residues) spans 312 to 337; the sequence is TEEEEEEEEEEEEEAEEEEEEEDSEE. Residues 338–348 are compositionally biased toward pro residues; the sequence is APPPLSPPQPA. Phosphoserine; by PKC occurs at positions 383 and 390. In terms of domain architecture, MRH spans 413 to 514; the sequence is SQCYELTTNE…ELMTPAACPE (102 aa). The cysteines at positions 415 and 428 are disulfide-linked. S434 is subject to Phosphoserine; by PKC. 2 disulfide bridges follow: C471-C500 and C485-C512. N476 carries an N-linked (GlcNAc...) asparagine glycan. Residues 525-528 carry the Prevents secretion from ER motif; that stretch reads HDEL.

Heterodimer of a catalytic alpha subunit (GANAB) and a beta subunit (PRKCSH). Binds glycosylated PTPRC.

Its subcellular location is the endoplasmic reticulum. It functions in the pathway glycan metabolism; N-glycan metabolism. Its function is as follows. Regulatory subunit of glucosidase II that cleaves sequentially the 2 innermost alpha-1,3-linked glucose residues from the Glc(2)Man(9)GlcNAc(2) oligosaccharide precursor of immature glycoproteins. Required for efficient PKD1/Polycystin-1 biogenesis and trafficking to the plasma membrane of the primary cilia. The protein is Glucosidase 2 subunit beta of Homo sapiens (Human).